A 458-amino-acid chain; its full sequence is Serine/threonine-protein kinase tricornered (458 aa).

The Protein kinase domain maps to 92-389 (FEALKVIGRG…LEDLKSVPFF (298 aa)). ATP contacts are provided by residues 98–106 (IGRGAFGEV) and Lys121. Residues 118–179 (YAMKVLRKAD…EFLPGGDMMT (62 aa)) are interaction with mats and Mob1. Asp215 (proton acceptor) is an active-site residue. Residue Ser287 is modified to Phosphoserine. An AGC-kinase C-terminal domain is found at 390 to 458 (RGVDWEHIRE…YKRFEVRNLE (69 aa)). Residue Thr448 is modified to Phosphothreonine.

The protein belongs to the protein kinase superfamily. AGC Ser/Thr protein kinase family. As to quaternary structure, interacts with, and is activated by, Mob1. It depends on Mg(2+) as a cofactor.

Its subcellular location is the cytoplasm. The protein localises to the nucleus. The catalysed reaction is L-seryl-[protein] + ATP = O-phospho-L-seryl-[protein] + ADP + H(+). The enzyme catalyses L-threonyl-[protein] + ATP = O-phospho-L-threonyl-[protein] + ADP + H(+). In terms of biological role, serine/threonine-protein kinase involved in controlling cell structure and proliferation of a variety of polarized outgrowths including epidermal hairs, bristles, arista laterals, and dendrites. Together with fry, maintains the integrity of epidermal hairs and is an essential component of the signaling pathway regulating dendritic branching of sensory neurons. Reduces neurite outgrowth by phosphorylating pav/pavarotti, thereby inhibiting its function in microtubule-microtubule sliding. This chain is Serine/threonine-protein kinase tricornered, found in Drosophila pseudoobscura pseudoobscura (Fruit fly).